The chain runs to 453 residues: Bifunctional protein GlmU (453 aa).

A pyrophosphorylase region spans residues 1–225 (MNIVILAAGT…EWETLGVNSK (225 aa)). UDP-N-acetyl-alpha-D-glucosamine-binding positions include 6–9 (LAAG), Lys20, Gln71, 76–77 (GT), 98–100 (YGD), Gly135, Glu150, Asn165, and Asn223. Asp100 serves as a coordination point for Mg(2+). Asn223 serves as a coordination point for Mg(2+). The interval 226-246 (QQLAELERIHQRNVADDLLVA) is linker. The N-acetyltransferase stretch occupies residues 247-453 (GVTIADPARI…GYVRPTKKKS (207 aa)). 2 residues coordinate UDP-N-acetyl-alpha-D-glucosamine: Arg329 and Lys347. His359 acts as the Proton acceptor in catalysis. Tyr362 and Asn373 together coordinate UDP-N-acetyl-alpha-D-glucosamine. Acetyl-CoA is bound by residues Ala376, 382-383 (NY), Ser401, and Ala419.

The protein in the N-terminal section; belongs to the N-acetylglucosamine-1-phosphate uridyltransferase family. This sequence in the C-terminal section; belongs to the transferase hexapeptide repeat family. In terms of assembly, homotrimer. Mg(2+) is required as a cofactor.

The protein localises to the cytoplasm. It catalyses the reaction alpha-D-glucosamine 1-phosphate + acetyl-CoA = N-acetyl-alpha-D-glucosamine 1-phosphate + CoA + H(+). It carries out the reaction N-acetyl-alpha-D-glucosamine 1-phosphate + UTP + H(+) = UDP-N-acetyl-alpha-D-glucosamine + diphosphate. It functions in the pathway nucleotide-sugar biosynthesis; UDP-N-acetyl-alpha-D-glucosamine biosynthesis; N-acetyl-alpha-D-glucosamine 1-phosphate from alpha-D-glucosamine 6-phosphate (route II): step 2/2. It participates in nucleotide-sugar biosynthesis; UDP-N-acetyl-alpha-D-glucosamine biosynthesis; UDP-N-acetyl-alpha-D-glucosamine from N-acetyl-alpha-D-glucosamine 1-phosphate: step 1/1. The protein operates within bacterial outer membrane biogenesis; LPS lipid A biosynthesis. Its function is as follows. Catalyzes the last two sequential reactions in the de novo biosynthetic pathway for UDP-N-acetylglucosamine (UDP-GlcNAc). The C-terminal domain catalyzes the transfer of acetyl group from acetyl coenzyme A to glucosamine-1-phosphate (GlcN-1-P) to produce N-acetylglucosamine-1-phosphate (GlcNAc-1-P), which is converted into UDP-GlcNAc by the transfer of uridine 5-monophosphate (from uridine 5-triphosphate), a reaction catalyzed by the N-terminal domain. The polypeptide is Bifunctional protein GlmU (Paraburkholderia phymatum (strain DSM 17167 / CIP 108236 / LMG 21445 / STM815) (Burkholderia phymatum)).